A 344-amino-acid polypeptide reads, in one-letter code: Anthranilate phosphoribosyltransferase (344 aa).

5-phospho-alpha-D-ribose 1-diphosphate is bound by residues Gly84, 87–88 (GD), Ser92, 94–97 (NIST), 112–120 (KHGNRSASG), and Ser124. Gly84 lines the anthranilate pocket. Ser96 provides a ligand contact to Mg(2+). Anthranilate is bound at residue Asn115. Arg170 is a binding site for anthranilate. The Mg(2+) site is built by Asp229 and Glu230.

It belongs to the anthranilate phosphoribosyltransferase family. As to quaternary structure, homodimer. Mg(2+) is required as a cofactor.

The enzyme catalyses N-(5-phospho-beta-D-ribosyl)anthranilate + diphosphate = 5-phospho-alpha-D-ribose 1-diphosphate + anthranilate. The protein operates within amino-acid biosynthesis; L-tryptophan biosynthesis; L-tryptophan from chorismate: step 2/5. Its function is as follows. Catalyzes the transfer of the phosphoribosyl group of 5-phosphorylribose-1-pyrophosphate (PRPP) to anthranilate to yield N-(5'-phosphoribosyl)-anthranilate (PRA). The protein is Anthranilate phosphoribosyltransferase of Synechococcus sp. (strain RCC307).